A 377-amino-acid chain; its full sequence is Protein RecA (377 aa).

65–72 (GPESSGKT) is a binding site for ATP. Positions 329–377 (GDEEAAATKATETKTDAPKDKDKGKTKAKDKPADVTPGQIELAPDKSAK) are disordered. A compositionally biased stretch (basic and acidic residues) spans 339 to 361 (TETKTDAPKDKDKGKTKAKDKPA).

Belongs to the RecA family.

Its subcellular location is the cytoplasm. Functionally, can catalyze the hydrolysis of ATP in the presence of single-stranded DNA, the ATP-dependent uptake of single-stranded DNA by duplex DNA, and the ATP-dependent hybridization of homologous single-stranded DNAs. It interacts with LexA causing its activation and leading to its autocatalytic cleavage. The polypeptide is Protein RecA (Levilactobacillus brevis (strain ATCC 367 / BCRC 12310 / CIP 105137 / JCM 1170 / LMG 11437 / NCIMB 947 / NCTC 947) (Lactobacillus brevis)).